Here is a 278-residue protein sequence, read N- to C-terminus: MRSNVHQGHVARKRFGQNFLVDDGIIHGIVSAIDPQPNDIVVEIGPGLGALTDPLLERLPGMQVVELDRDLVERLRRRYGDRLVVHAGDALAFDFGKLREPGRALRIVGNLPYNISSPLLFHLVDFADDVRDQHFMLQKEVVERMVADPGSKSYGRLSIMLQVRYHMEHVLDVPPASFNPPPKVDSAVVRMIPWPRAEDGTLRSPYAACDAGVLGDVVTAAFSQRRKVLRNTLSFLRDQVDFDALGFDLTRRAEEVPVAEYVELARIVGGAEPPARVA.

Residues asparagine 18, leucine 20, glycine 45, glutamate 66, aspartate 89, and asparagine 110 each coordinate S-adenosyl-L-methionine.

Belongs to the class I-like SAM-binding methyltransferase superfamily. rRNA adenine N(6)-methyltransferase family. RsmA subfamily.

It localises to the cytoplasm. The enzyme catalyses adenosine(1518)/adenosine(1519) in 16S rRNA + 4 S-adenosyl-L-methionine = N(6)-dimethyladenosine(1518)/N(6)-dimethyladenosine(1519) in 16S rRNA + 4 S-adenosyl-L-homocysteine + 4 H(+). In terms of biological role, specifically dimethylates two adjacent adenosines (A1518 and A1519) in the loop of a conserved hairpin near the 3'-end of 16S rRNA in the 30S particle. May play a critical role in biogenesis of 30S subunits. The sequence is that of Ribosomal RNA small subunit methyltransferase A from Cupriavidus metallidurans (strain ATCC 43123 / DSM 2839 / NBRC 102507 / CH34) (Ralstonia metallidurans).